A 419-amino-acid polypeptide reads, in one-letter code: Putative competence-damage inducible protein (419 aa).

The protein belongs to the CinA family.

The sequence is that of Putative competence-damage inducible protein from Streptococcus agalactiae serotype III (strain NEM316).